The following is a 1113-amino-acid chain: MLGSKSIIAVVAIASAIVTGVVVIVVVVTLSVVLTRSSVKDTNSIYVPDVITNDPQMTNEMDTLEVISSSKFSGTKPKEWTMKYTKYPYWRCGLTFTNEEKQNIVNENKEYMNSLLQLINNGSLGRMPEKYGGDKQFEANGVNWEADRLEVRYGLFGRVFGQRAVAWAFPGEIVTIKFPKGMSYKGIQVGIGKCNHNPSDQWLNVNNWSNDRMPIDSIGFDLGLNTTQPYIINDTFKIGSPFGGMIYLRSDTTFTNSFYVTFSNVGRAPIINYNITTNEEWNSVLRNAPGNVAEIRTPGNRLVLTSRNIRSLEDAQYISDFWLKAISISNYAVTLENIPITLNFDQRVDAGAAVAYVGRWFTQNPSDWAAACVGKDGLINYGNWGPLHEMNHHMQGTYLKGGNWGISNPGEETNNVMTSINYILYTNIAGHRNQGLSGWNYVSDGYSTIYKILKGENDQPHLRSYVNMAHAFGTDTLIALVKSYYGLWYENNFESKYSIKRDSTSAFCLLAALVTKRDTRYLCSLFKYDIQSNVSEAIKNMNYPTYYPFFNLYAMSYNGNYYGRPYKIPYGRTRLNFTATTAIDPKATSVSYTIKSGLTKGKLERVEDNVYDYTPFFGIEENDTFVLNIDCVVNGEKVHIEQEGTFELDPHQVEYEVYKDVQTRDMAQALNIIQNKTANDTGRASFFGIGTYNDGSMQSMLVEKGKLIVPKSGYYTLFMKADDLGRLLLNITGEYEQLLDVKTYLGGYSKTLNGSYATVKLEKDVGYPFILYNLNTGGQGFIRIGYCYHGTEESSVDVSKCSVSDIGSSMVLNEKVKTGAKEPEFQIPPIKYSRPTRFLTNAYRTIPKCLNGDDACSIKCLSLPLKHDDSSKCSNMFDDNYSTMYHSRWTGQGTTFPVNYTFEFSENVTFNNLYVHHRRPEDSWGYFEMFVKSPETGEMELLEKYKHPKSTTTELNFQKLVTTDRVQFIVYNNSNGGNYVNVVELSFNIKETFKNYTNSFGPKIKSTGFKKVTTPGASGGYLAVNEKEGEGSLCFKAKVTKFGLYGYRKTTSGKFRVTIDSQPGEVTSQSYFSDSERTLFYAHTFDETEANKVHNICMEVVEGTVNLDIIGSS.

A helical membrane pass occupies residues 7-27; that stretch reads IIAVVAIASAIVTGVVVIVVV. Residues N121, N207, N225, N233, N274, N533, N576, N622, N675, N679, N730, N753, N880, N899, N907, N972, and N995 are each glycosylated (N-linked (GlcNAc...) asparagine). One can recognise a Peptidase M60 domain in the interval 159-473; the sequence is VFGQRAVAWA…SYVNMAHAFG (315 aa). The 153-residue stretch at 648 to 800 folds into the PA14 domain; sequence LDPHQVEYEV…TEESSVDVSK (153 aa).

It localises to the membrane. The chain is Antigenic protein P1 from Entamoeba histolytica (strain ATCC 30459 / HM-1:IMSS / ABRM).